A 308-amino-acid polypeptide reads, in one-letter code: Acetylglutamate kinase (308 aa).

Residues 64–65 (GG), arginine 86, and asparagine 192 each bind substrate.

This sequence belongs to the acetylglutamate kinase family. ArgB subfamily.

The protein resides in the cytoplasm. It carries out the reaction N-acetyl-L-glutamate + ATP = N-acetyl-L-glutamyl 5-phosphate + ADP. Its pathway is amino-acid biosynthesis; L-arginine biosynthesis; N(2)-acetyl-L-ornithine from L-glutamate: step 2/4. Its function is as follows. Catalyzes the ATP-dependent phosphorylation of N-acetyl-L-glutamate. The sequence is that of Acetylglutamate kinase from Myxococcus xanthus (strain DK1622).